The chain runs to 684 residues: Endo-1,4-beta-xylanase A (684 aa).

The N-terminal stretch at 1–34 (MMRSLKSRKLVFILAMLFLINAIVSLKFITYSSA) is a signal peptide. CBM-cenC domains follow at residues 40-190 (KSKY…IKDL) and 193-342 (AYVL…ISDE). One can recognise a GH10 domain in the interval 350–678 (DYNLPSLCEK…KFAFWSLIDP (329 aa)). Glu-490 (proton donor) is an active-site residue. The active-site Nucleophile is Glu-598.

It belongs to the glycosyl hydrolase 10 (cellulase F) family.

The enzyme catalyses Endohydrolysis of (1-&gt;4)-beta-D-xylosidic linkages in xylans.. It participates in glycan degradation; xylan degradation. The protein is Endo-1,4-beta-xylanase A (xynA) of Caldicellulosiruptor sp. (strain Rt8B.4).